Consider the following 343-residue polypeptide: MKNQWKTSDFDYNLPVELIAQRPLADRSGSRLLYIDRSRRTVSHRQFNGFVEQVKPNDLVVLNDTKVIPARLFGHKQTGGKVECLVERILSKDRFLAHIRASKAPKLGSQIIIADNFKIIIEGRYNDLFECVLHSSASILDLLYQHGRIPLPPYIQREPDKDDQARYQTIFAERAGAVAAPTAGLHFNEETFDALRKKGAAITYVTLHVGAGTFQPVRADSLADHRMHHEWMEVSKAVCDAIAKCRKNNGRVIAVGTTVMRCLETATKNSECRPYAGETDLFIYPGFQFNCVDALLTNFHLPKSTLLMLVCAFGGYELVMEAYQKAVENRYRFFSYGDAMLIS.

It belongs to the QueA family. As to quaternary structure, monomer.

It localises to the cytoplasm. The enzyme catalyses 7-aminomethyl-7-carbaguanosine(34) in tRNA + S-adenosyl-L-methionine = epoxyqueuosine(34) in tRNA + adenine + L-methionine + 2 H(+). The protein operates within tRNA modification; tRNA-queuosine biosynthesis. Functionally, transfers and isomerizes the ribose moiety from AdoMet to the 7-aminomethyl group of 7-deazaguanine (preQ1-tRNA) to give epoxyqueuosine (oQ-tRNA). In Coxiella burnetii (strain RSA 331 / Henzerling II), this protein is S-adenosylmethionine:tRNA ribosyltransferase-isomerase.